Here is a 173-residue protein sequence, read N- to C-terminus: Placenta-specific protein 1 (173 aa).

The N-terminal stretch at Met-1–Gln-23 is a signal peptide.

This sequence belongs to the PLAC1 family.

It is found in the secreted. May play a role in placental development. The polypeptide is Placenta-specific protein 1 (Rattus norvegicus (Rat)).